The chain runs to 174 residues: Crossover junction endodeoxyribonuclease RuvC (174 aa).

Residues Asp8, Glu67, and Asp139 contribute to the active site. Mg(2+) contacts are provided by Asp8, Glu67, and Asp139.

The protein belongs to the RuvC family. As to quaternary structure, homodimer which binds Holliday junction (HJ) DNA. The HJ becomes 2-fold symmetrical on binding to RuvC with unstacked arms; it has a different conformation from HJ DNA in complex with RuvA. In the full resolvosome a probable DNA-RuvA(4)-RuvB(12)-RuvC(2) complex forms which resolves the HJ. It depends on Mg(2+) as a cofactor.

The protein resides in the cytoplasm. It catalyses the reaction Endonucleolytic cleavage at a junction such as a reciprocal single-stranded crossover between two homologous DNA duplexes (Holliday junction).. In terms of biological role, the RuvA-RuvB-RuvC complex processes Holliday junction (HJ) DNA during genetic recombination and DNA repair. Endonuclease that resolves HJ intermediates. Cleaves cruciform DNA by making single-stranded nicks across the HJ at symmetrical positions within the homologous arms, yielding a 5'-phosphate and a 3'-hydroxyl group; requires a central core of homology in the junction. The consensus cleavage sequence is 5'-(A/T)TT(C/G)-3'. Cleavage occurs on the 3'-side of the TT dinucleotide at the point of strand exchange. HJ branch migration catalyzed by RuvA-RuvB allows RuvC to scan DNA until it finds its consensus sequence, where it cleaves and resolves the cruciform DNA. The protein is Crossover junction endodeoxyribonuclease RuvC of Pseudomonas fluorescens (strain SBW25).